A 352-amino-acid chain; its full sequence is 3-isopropylmalate dehydrogenase (352 aa).

Residue 76 to 89 (GPKWENLPHEHKPE) participates in NAD(+) binding. Substrate contacts are provided by R96, R106, R134, and D219. 3 residues coordinate Mg(2+): D219, D243, and D247. 276–288 (GSAPDIAGQNKAN) is a binding site for NAD(+).

It belongs to the isocitrate and isopropylmalate dehydrogenases family. LeuB type 1 subfamily. As to quaternary structure, homodimer. It depends on Mg(2+) as a cofactor. The cofactor is Mn(2+).

The protein localises to the cytoplasm. It carries out the reaction (2R,3S)-3-isopropylmalate + NAD(+) = 4-methyl-2-oxopentanoate + CO2 + NADH. It participates in amino-acid biosynthesis; L-leucine biosynthesis; L-leucine from 3-methyl-2-oxobutanoate: step 3/4. Catalyzes the oxidation of 3-carboxy-2-hydroxy-4-methylpentanoate (3-isopropylmalate) to 3-carboxy-4-methyl-2-oxopentanoate. The product decarboxylates to 4-methyl-2 oxopentanoate. This Chlorobium chlorochromatii (strain CaD3) protein is 3-isopropylmalate dehydrogenase.